The following is a 320-amino-acid chain: Dual oxidase maturation factor 2 (320 aa).

Residues 22–42 (VPLLIVILVFLSLAASFLFIL) traverse the membrane as a helical segment. Residues 43-51 (PGIRGHSRW) are Cytoplasmic-facing. The helical transmembrane segment at 52–72 (FWLVRVLLSLFIGAEIVAVHF) threads the bilayer. The Extracellular segment spans residues 73-183 (SGDWFVGRVW…HLAGHYAAAT (111 aa)). Asn84, Asn109, and Asn121 each carry an N-linked (GlcNAc...) asparagine glycan. Residues 184-204 (LWVAFCFWIIANALLSMPAPL) traverse the membrane as a helical segment. Residues 205-206 (YG) lie on the Cytoplasmic side of the membrane. The chain crosses the membrane as a helical span at residues 207 to 227 (GLALLTTGAFTLFGVFAFASI). The Extracellular segment spans residues 228–249 (SSVPLCHFRLGSAVLTPYYGAS). A helical transmembrane segment spans residues 250-270 (FWLTLATGILSLLLGGAVVIL). Residues 271 to 320 (HYTRPSALRSFLDLSVKDCSNQAKGNSPLTLNNPQHEQLKSPDLNITTLL) are Cytoplasmic-facing.

This sequence belongs to the DUOXA family. As to quaternary structure, heterodimer with DUXA2; disulfide-linked. Interacts with CSNK1G2. Post-translationally, N-glycosylated.

It is found in the endoplasmic reticulum membrane. In terms of biological role, required for the maturation and the transport from the endoplasmic reticulum to the plasma membrane of functional DUOX2. May play a role in thyroid hormone synthesis. This Mus musculus (Mouse) protein is Dual oxidase maturation factor 2 (Duoxa2).